The following is a 643-amino-acid chain: Mitochondrial Rho GTPase 2 (643 aa).

The Cytoplasmic portion of the chain corresponds to 1–611; that stretch reads MMLGGKSSAG…SGRRSRNIRQ (611 aa). The region spanning 12–179 is the Miro 1 domain; it reads RTSLRVAVAG…FYFASKAVLH (168 aa). 2 EF-hand domains span residues 195–230 and 315–350; these read RLRRAVQRIFNLCDHDLDGALNDAELNDFQVNCFGA and EAMDFLSGIFQLYDLDNDGALQPAELDDLFQTAPDS. 8 residues coordinate Ca(2+): aspartate 208, aspartate 210, aspartate 212, glutamate 219, aspartate 328, aspartate 330, aspartate 332, and glutamate 339. Residues 423–592 form the Miro 2 domain; it reads RNVFQCFVFG…FSRIVSTAEN (170 aa). Residues 612-632 form a helical membrane-spanning segment; it reads LVNSSLLFVSVGTAVGFAGLA. Residues 633 to 643 are Mitochondrial intermembrane-facing; sequence AYRAYSARKNA.

This sequence belongs to the mitochondrial Rho GTPase family. Expressed roots, rosette and cauline leaves, stems, flowers and siliques.

Its subcellular location is the mitochondrion outer membrane. With respect to regulation, activated by calcium. Its function is as follows. Calcium-binding mitochondrial GTPase involved in calcium signaling during salt stress response. May play a role in the progression of embryonic cell division, development of haploid male and female gametes, and pollen tube growth. The sequence is that of Mitochondrial Rho GTPase 2 from Arabidopsis thaliana (Mouse-ear cress).